Consider the following 188-residue polypeptide: Ribose 1,5-bisphosphate phosphokinase PhnN (188 aa).

An ATP-binding site is contributed by 9–16 (GPSGAGKD).

Belongs to the ribose 1,5-bisphosphokinase family.

The enzyme catalyses alpha-D-ribose 1,5-bisphosphate + ATP = 5-phospho-alpha-D-ribose 1-diphosphate + ADP. Its pathway is metabolic intermediate biosynthesis; 5-phospho-alpha-D-ribose 1-diphosphate biosynthesis; 5-phospho-alpha-D-ribose 1-diphosphate from D-ribose 5-phosphate (route II): step 3/3. Functionally, catalyzes the phosphorylation of ribose 1,5-bisphosphate to 5-phospho-D-ribosyl alpha-1-diphosphate (PRPP). In Pectobacterium parmentieri (strain WPP163) (Pectobacterium wasabiae (strain WPP163)), this protein is Ribose 1,5-bisphosphate phosphokinase PhnN.